The primary structure comprises 609 residues: Invertase (609 aa).

Residues 1-14 (MLKLLSLMVPLASA) form the signal peptide. 3 N-linked (GlcNAc...) asparagine glycosylation sites follow: asparagine 23, asparagine 32, and asparagine 36. Substrate is bound by residues 56–59 (WMND), glutamine 77, and 119–120 (FS). Aspartate 59 is an active-site residue. 3 N-linked (GlcNAc...) asparagine glycosylation sites follow: asparagine 128, asparagine 129, and asparagine 135. 187–188 (RD) is a binding site for substrate. N-linked (GlcNAc...) asparagine glycosylation is found at asparagine 227 and asparagine 233. Glutamate 245 is a substrate binding site. N-linked (GlcNAc...) asparagine glycosylation is found at asparagine 257, asparagine 267, asparagine 277, asparagine 284, asparagine 291, asparagine 298, asparagine 303, and asparagine 345. Residue tryptophan 389 participates in substrate binding. 8 N-linked (GlcNAc...) asparagine glycosylation sites follow: asparagine 409, asparagine 420, asparagine 440, asparagine 448, asparagine 452, asparagine 477, asparagine 545, and asparagine 566.

The protein belongs to the glycosyl hydrolase 32 family.

The catalysed reaction is Hydrolysis of terminal non-reducing beta-D-fructofuranoside residues in beta-D-fructofuranosides.. This chain is Invertase (INV1), found in Kluyveromyces lactis (strain ATCC 8585 / CBS 2359 / DSM 70799 / NBRC 1267 / NRRL Y-1140 / WM37) (Yeast).